The chain runs to 530 residues: UDP-glucuronosyltransferase 2B7 (530 aa).

The first 17 residues, 1-17, serve as a signal peptide directing secretion; sequence MPQKWISALLLLQISFC. Asparagine 316 carries N-linked (GlcNAc...) asparagine glycosylation. UDP-alpha-D-glucuronate contacts are provided by residues 374 to 380 and glutamate 400; that span reads THGGANG. Residues 496–516 traverse the membrane as a helical segment; it reads IGFLLACVLAIVLLAVKCCLF.

It belongs to the UDP-glycosyltransferase family.

It is found in the endoplasmic reticulum membrane. It catalyses the reaction glucuronate acceptor + UDP-alpha-D-glucuronate = acceptor beta-D-glucuronoside + UDP + H(+). The catalysed reaction is 17alpha-estradiol + UDP-alpha-D-glucuronate = 17alpha-estradiol 17-O-(beta-D-glucuronate) + UDP + H(+). It carries out the reaction 17beta-estradiol + UDP-alpha-D-glucuronate = 17beta-estradiol 17-O-(beta-D-glucuronate) + UDP + H(+). The enzyme catalyses 2-hydroxy-17beta-estradiol + UDP-alpha-D-glucuronate = 2-hydroxy-17beta-estradiol 3-O-(beta-D-glucuronate) + UDP + H(+). It catalyses the reaction 4-hydroxy-17beta-estradiol + UDP-alpha-D-glucuronate = 17beta-estradiol 4-O-(beta-D-glucuronate) + UDP + H(+). The catalysed reaction is 4-hydroxyestrone + UDP-alpha-D-glucuronate = estrone 4-O-(beta-D-glucuronate) + UDP + H(+). It carries out the reaction 16alpha-hydroxyestrone + UDP-alpha-D-glucuronate = 16alpha-hydroxyestrone 16-O-(beta-D-glucuronate) + UDP + H(+). The enzyme catalyses 16alpha,17beta-estriol + UDP-alpha-D-glucuronate = 16alpha,17beta-estriol 16-O-(beta-D-glucuronate) + UDP + H(+). It catalyses the reaction 16beta,17beta-estriol + UDP-alpha-D-glucuronate = 16beta,17beta-estriol 16-O-(beta-D-glucuronate) + UDP + H(+). The catalysed reaction is 16alpha,17alpha-estriol + UDP-alpha-D-glucuronate = 16alpha,17alpha-estriol 16-O-(beta-D-glucuronate) + UDP + H(+). It carries out the reaction 16alpha,17alpha-estriol + UDP-alpha-D-glucuronate = 16alpha,17alpha-estriol 17-O-(beta-D-glucuronate) + UDP + H(+). The enzyme catalyses epitestosterone + UDP-alpha-D-glucuronate = epitestosterone 17-O-(beta-D-glucuronate) + UDP + H(+). It catalyses the reaction hyodeoxycholate + UDP-alpha-D-glucuronate = hyodeoxycholate 6-O-(beta-D-glucuronate) + UDP + H(+). The catalysed reaction is hyocholate + UDP-alpha-D-glucuronate = hyocholate 6-O-(beta-D-glucuronate) + UDP + H(+). It carries out the reaction all-trans-retinoate + UDP-alpha-D-glucuronate = all-trans-retinoyl-1-O-(beta-D-glucuronate) + UDP. The enzyme catalyses all-trans-4-hydroxyretinoate + UDP-alpha-D-glucuronate = all-trans-4-hydroxy-4-O-(beta-D-glucuronide)-retinoate + UDP + H(+). It catalyses the reaction (E)-ferulate + UDP-alpha-D-glucuronate = (E)-ferulic acid beta-D-glucuronate ester + UDP. The catalysed reaction is 8-iso-prostaglandin F2alpha + UDP-alpha-D-glucuronate = 8-iso-prostaglandin F2alpha-glucuronide + UDP + H(+). It carries out the reaction 5-epi-5-F2t-IsoP + UDP-alpha-D-glucuronate = 5-epi-5-F2t-IsoP-glucuronide + UDP + H(+). The enzyme catalyses (5Z,8Z,11Z,14Z)-eicosatetraenoate + UDP-alpha-D-glucuronate = O-[(5Z),(8Z),(11Z),(14Z)-eicosatetraenoyl]-beta-D-glucuronate + UDP. It catalyses the reaction 15-hydroxy-(5Z,8Z,11Z,13E)-eicosatetraenoate + UDP-alpha-D-glucuronate = 15-O-(beta-D-glucuronosyl)-(5Z,8Z,11Z,14Z)-eicosatetraenoate + UDP + H(+). The catalysed reaction is 20-hydroxy-(5Z,8Z,11Z,14Z)-eicosatetraenoate + UDP-alpha-D-glucuronate = 20-O-(beta-D-glucuronosyl)-(5Z,8Z,11Z,14Z)-eicosatetraenoate + UDP + H(+). It carries out the reaction (E)-ferulate + UDP-alpha-D-glucuronate = (E)-4-O-(beta-D-glucuronosyl)-ferulate + UDP + H(+). The enzyme catalyses prostaglandin B1 + UDP-alpha-D-glucuronate = 15-O-(beta-D-glucuronosyl)-prostaglandin B1 + UDP + H(+). It catalyses the reaction mycophenolate + UDP-alpha-D-glucuronate = mycophenolic acid O-acyl-beta-D-glucuronide + UDP. The catalysed reaction is losartan + UDP-alpha-D-glucuronate = losartan-2-N-beta-D-glucuronide + UDP. It carries out the reaction candesartan + UDP-alpha-D-glucuronate = candesartan O-beta-D-glucuronoside + UDP. The enzyme catalyses candesartan + UDP-alpha-D-glucuronate = candesartan-2-N-beta-D-glucuronide + UDP. It catalyses the reaction zolasartan + UDP-alpha-D-glucuronate = zolarsartan O-beta-D-glucuronoside + UDP. Its function is as follows. UDP-glucuronosyltransferase (UGT) that catalyzes phase II biotransformation reactions in which lipophilic substrates are conjugated with glucuronic acid to increase the metabolite's water solubility, thereby facilitating excretion into either the urine or bile. Essential for the elimination and detoxification of drugs, xenobiotics and endogenous compounds. Catalyzes the glucuronidation of endogenous steroid hormones such as androgens (epitestosterone, androsterone) and estrogens (estradiol, epiestradiol, estriol, catechol estrogens). Also regulates the levels of retinoic acid, a major metabolite of vitamin A involved in apoptosis, cellular growth and differentiation, and embryonic development. Contributes to bile acid (BA) detoxification by catalyzing the glucuronidation of BA substrates, which are natural detergents for dietary lipids absorption. Involved in the glucuronidation of arachidonic acid (AA) and AA-derived eicosanoids including 15-HETE, 20-HETE, PGE2, PGB1 and F2-isoprostanes (8-iso-PGF2alpha and 5-epi-5-F2t-IsoP). Involved in the glucuronidation of the phytochemical ferulic acid at the phenolic or the carboxylic acid group. Involved in the glucuronidation of the AGTR1 angiotensin receptor antagonist losartan, caderastan and zolarsatan, drugs which can inhibit the effect of angiotensin II. Also metabolizes mycophenolate, an immunosuppressive agent. The chain is UDP-glucuronosyltransferase 2B7 from Rattus norvegicus (Rat).